Reading from the N-terminus, the 793-residue chain is MAAGRPVRGPELAPRRLLQLLLLVLLGGRGRGAALSGNVTGPGPRSAGGSARRNAPVTSPPPPLLSHCGRAAHCEPLRYNVCLGSALPYGATTTLLAGDSDSQEEAHSKLVLWSGLRNAPRCWAVIQPLLCAVYMPKCENDRVELPSRTLCQATRGPCAIVERERGWPDFLRCTPDHFPEGCPNEVQNIKFNSSGQCEAPLVRTDNPKSWYEDVEGCGIQCQNPLFTEAEHQDMHSYIAAFGAVTGLCTLFTLATFVADWRNSNRYPAVILFYVNACFFVGSIGWLAQFMDGARREIVCRADGTMRFGEPTSSETLSCVIIFVIVYYALMAGVVWFVVLTYAWHTSFKALGTTYQPLSGKTSYFHLLTWSLPFVLTVAILAVAQVDGDSVSGICFVGYKNYRYRAGFVLAPIGLVLIVGGYFLIRGVMTLFSIKSNHPGLLSEKAASKINETMLRLGIFGFLAFGFVLITFSCHFYDFFNQAEWERSFRDYVLCQANVTIGLPTKKPIPDCEIKNRPSLLVEKINLFAMFGTGIAMSTWVWTKATLLIWRRTWCRLTGHSDDEPKRIKKSKMIAKAFSKRRELLQNPGQELSFSMHTVSHDGPVAGLAFELNEPSADVSSAWAQHVTKMVARRGAILPQDVSVTPVATPVPPEEQANLWLVEAEISPELEKRLGRKKKRRKRKKEVCPLGPAPELHHSAPVPATSAVPRLPQLPRQKCLVAANAWGTGEPCRQGAWTVVSNPFCPEPSPHQDPFLPGASAPRVWAQGRLQGLGSIHSRTNLMEAELLDADSDF.

A signal peptide spans 1–30 (MAAGRPVRGPELAPRRLLQLLLLVLLGGRG). Residues 31–237 (RGAALSGNVT…EAEHQDMHSY (207 aa)) lie on the Extracellular side of the membrane. Positions 35 to 61 (LSGNVTGPGPRSAGGSARRNAPVTSPP) are disordered. A glycan (N-linked (GlcNAc...) asparagine) is linked at N38. 5 disulfides stabilise this stretch: C68-C182, C74-C138, C82-C131, C122-C158, and C151-C173. Residues 69 to 185 (GRAAHCEPLR…DHFPEGCPNE (117 aa)) form the FZ domain. Cholesterol is bound at residue D99. N192 carries an N-linked (GlcNAc...) asparagine glycan. Disulfide bonds link C197–C217, C221–C299, and C318–C394. The chain crosses the membrane as a helical span at residues 238–258 (IAAFGAVTGLCTLFTLATFVA). The Cytoplasmic portion of the chain corresponds to 259-266 (DWRNSNRY). Residues 267–287 (PAVILFYVNACFFVGSIGWLA) traverse the membrane as a helical segment. Residues 288 to 318 (QFMDGARREIVCRADGTMRFGEPTSSETLSC) are Extracellular-facing. Residues 319–339 (VIIFVIVYYALMAGVVWFVVL) form a helical membrane-spanning segment. The Cytoplasmic portion of the chain corresponds to 340-362 (TYAWHTSFKALGTTYQPLSGKTS). A helical transmembrane segment spans residues 363 to 383 (YFHLLTWSLPFVLTVAILAVA). The Extracellular segment spans residues 384–406 (QVDGDSVSGICFVGYKNYRYRAG). Position 398 (Y398) interacts with cholesterol. The helical transmembrane segment at 407–427 (FVLAPIGLVLIVGGYFLIRGV) threads the bilayer. Residues 428–455 (MTLFSIKSNHPGLLSEKAASKINETMLR) lie on the Cytoplasmic side of the membrane. The helical transmembrane segment at 456–476 (LGIFGFLAFGFVLITFSCHFY) threads the bilayer. The Extracellular portion of the chain corresponds to 477-528 (DFFNQAEWERSFRDYVLCQANVTIGLPTKKPIPDCEIKNRPSLLVEKINLFA). An intrachain disulfide couples C494 to C511. N-linked (GlcNAc...) asparagine glycosylation occurs at N497. The chain crosses the membrane as a helical span at residues 529–549 (MFGTGIAMSTWVWTKATLLIW). The interaction with BBS5 and BBS7 stretch occupies residues 542 to 573 (TKATLLIWRRTWCRLTGHSDDEPKRIKKSKMI). The Cytoplasmic portion of the chain corresponds to 550-793 (RRTWCRLTGH…AELLDADSDF (244 aa)). Phosphoserine is present on residues S560, S578, and S594. The interval 574–657 (AKAFSKRREL…TPVPPEEQAN (84 aa)) is required for interaction with PRKACA. The segment at 585–597 (QNPGQELSFSMHT) is interaction with DLG5. At T597 the chain carries Phosphothreonine. Phosphoserine occurs at positions 599 and 642. T644 and T648 each carry phosphothreonine. S666 is modified (phosphoserine). A compositionally biased stretch (basic residues) spans 674 to 684 (GRKKKRRKRKK). The disordered stretch occupies residues 674-702 (GRKKKRRKRKKEVCPLGPAPELHHSAPVP).

Belongs to the G-protein coupled receptor Fz/Smo family. Homodimer. Interacts (via C-terminus) with protein kinase A catalytic subunit PRKACA; interacts with free PRKACA subunits and the interaction leads to sequestration of PRKACA at the membrane, preventing PRKACA-mediated phosphorylation of GLI transcription factors. Interacts with ARRB2. Interacts with KIF7. Interacts with BBS5 and BBS7; the interactions are indicative for the association of SMO with the BBsome complex to facilitate ciliary localization of SMO. Interacts with DLG5 and SDCBP. Interacts with GAS8/DRC4. In terms of processing, phosphorylation by GRK kinases is required for interaction with protein kinase A catalytic subunit PRKACA. In embryo, found in the early neural folds and neural tube, pre-somitic mesoderm and somites, developing limb bud, gut, eye, testes, cartilage, muscle, lung, epiglottis, thymus, tongue, jaw, taste buds, teeth, and skin. In adult, found in multiple tissues including heart, brain, liver, lung, skeletal muscle, kidney and testis.

Its subcellular location is the cell membrane. It is found in the cell projection. It localises to the cilium. In terms of biological role, g protein-coupled receptor which associates with the patched protein (PTCH) to transduce hedgehog protein signaling. Binding of sonic hedgehog (SHH) to its receptor patched prevents inhibition of smoothened (SMO) by patched. When active, SMO binds to and sequesters protein kinase A catalytic subunit PRKACA at the cell membrane, preventing PRKACA-mediated phosphorylation of GLI transcription factors which releases the GLI proteins from PRKACA-mediated inhibition and allows for transcriptional activation of hedgehog pathway target genes. Required for the accumulation of KIF7, GLI2 and GLI3 in the cilia. Interacts with DLG5 at the ciliary base to induce the accumulation of KIF7 and GLI2 at the ciliary tip for GLI2 activation. This is Protein smoothened (Smo) from Rattus norvegicus (Rat).